The sequence spans 419 residues: Serine hydroxymethyltransferase (419 aa).

(6S)-5,6,7,8-tetrahydrofolate is bound by residues Leu-121 and 125–127 (GHL). Lys-230 carries the N6-(pyridoxal phosphate)lysine modification. (6S)-5,6,7,8-tetrahydrofolate is bound at residue 355–357 (SPF).

This sequence belongs to the SHMT family. In terms of assembly, homodimer. Pyridoxal 5'-phosphate serves as cofactor.

The protein resides in the cytoplasm. The enzyme catalyses (6R)-5,10-methylene-5,6,7,8-tetrahydrofolate + glycine + H2O = (6S)-5,6,7,8-tetrahydrofolate + L-serine. It participates in one-carbon metabolism; tetrahydrofolate interconversion. It functions in the pathway amino-acid biosynthesis; glycine biosynthesis; glycine from L-serine: step 1/1. Catalyzes the reversible interconversion of serine and glycine with tetrahydrofolate (THF) serving as the one-carbon carrier. This reaction serves as the major source of one-carbon groups required for the biosynthesis of purines, thymidylate, methionine, and other important biomolecules. Also exhibits THF-independent aldolase activity toward beta-hydroxyamino acids, producing glycine and aldehydes, via a retro-aldol mechanism. The protein is Serine hydroxymethyltransferase of Streptococcus equi subsp. equi (strain 4047).